The primary structure comprises 329 residues: L-lactate dehydrogenase (329 aa).

NAD(+) contacts are provided by residues Val18, Glu39, Lys46, Tyr71, and 85–86; that span reads GA. The substrate site is built by Gln88 and Arg94. NAD(+)-binding positions include Ser107, 124–126, and Ser149; that span reads AAN. 126 to 129 contributes to the substrate binding site; the sequence is NPVD. Substrate is bound at residue 154 to 157; it reads DSAR. The beta-D-fructose 1,6-bisphosphate site is built by Arg159 and His174. Residue His181 is the Proton acceptor of the active site. Tyr226 is subject to Phosphotyrosine. Thr235 lines the substrate pocket.

This sequence belongs to the LDH/MDH superfamily. LDH family. Homotetramer.

It localises to the cytoplasm. The catalysed reaction is (S)-lactate + NAD(+) = pyruvate + NADH + H(+). Its pathway is fermentation; pyruvate fermentation to lactate; (S)-lactate from pyruvate: step 1/1. Allosterically activated by fructose 1,6-bisphosphate (FBP). Its function is as follows. Catalyzes the conversion of lactate to pyruvate. The protein is L-lactate dehydrogenase of Streptococcus agalactiae serotype V (strain ATCC BAA-611 / 2603 V/R).